A 309-amino-acid chain; its full sequence is MLSAAEGILLSIATVEAGLGVLGNTFIALVNCMDWAKNKKLSKIGFLLFGLATSRIFIVWILILDAYAKLFFPGKYLSKSLTEIISCIWMTVNHMTVWFATSLSIFYFLKIANFSHYIFLWLKRRTDKVFAFLLWCLLISWAISFSFTVKVMKSNPKNHGNRTSGTHWEKREFTSNYVLINIGVISLLIMTLTACFLLIISLWKHSRQMQSNVSGFRDLNTEAHVKAIKFLISFIILFILYFIGVAVEIICMFIPENKLLFIFGLTTASVYPCCHSVILILTNSQLKQAFVKVLEGLKFSENGKDLRAT.

Topologically, residues 1-9 are extracellular; it reads MLSAAEGIL. Residues 10-32 form a helical membrane-spanning segment; it reads LSIATVEAGLGVLGNTFIALVNC. At 33 to 44 the chain is on the cytoplasmic side; that stretch reads MDWAKNKKLSKI. The chain crosses the membrane as a helical span at residues 45 to 67; the sequence is GFLLFGLATSRIFIVWILILDAY. The Extracellular segment spans residues 68–86; it reads AKLFFPGKYLSKSLTEIIS. A helical membrane pass occupies residues 87–109; sequence CIWMTVNHMTVWFATSLSIFYFL. Over 110 to 129 the chain is Cytoplasmic; sequence KIANFSHYIFLWLKRRTDKV. The chain crosses the membrane as a helical span at residues 130–149; that stretch reads FAFLLWCLLISWAISFSFTV. At 150–177 the chain is on the extracellular side; it reads KVMKSNPKNHGNRTSGTHWEKREFTSNY. N161 is a glycosylation site (N-linked (GlcNAc...) asparagine). A helical transmembrane segment spans residues 178–200; sequence VLINIGVISLLIMTLTACFLLII. The Cytoplasmic segment spans residues 201-226; the sequence is SLWKHSRQMQSNVSGFRDLNTEAHVK. The chain crosses the membrane as a helical span at residues 227 to 249; the sequence is AIKFLISFIILFILYFIGVAVEI. Residues 250-258 lie on the Extracellular side of the membrane; it reads ICMFIPENK. The chain crosses the membrane as a helical span at residues 259–281; the sequence is LLFIFGLTTASVYPCCHSVILIL. Residues 282–309 lie on the Cytoplasmic side of the membrane; the sequence is TNSQLKQAFVKVLEGLKFSENGKDLRAT.

It belongs to the G-protein coupled receptor T2R family. In terms of tissue distribution, expressed in subsets of taste receptor cells of the tongue and palate epithelium and exclusively in gustducin-positive cells. Expressed in 15% taste bud cells in circumvallate and foliate papillae but only in 2% in fungiform papillae. Expressed in the duodenum, antrum and fundus (part of the stomach).

The protein resides in the membrane. Gustducin-coupled cycloheximide receptor implicated in the perception of bitter compounds in the oral cavity and the gastrointestinal tract. Signals through PLCB2 and the calcium-regulated cation channel TRPM5. The polypeptide is Taste receptor type 2 member 105 (Tas2r105) (Rattus norvegicus (Rat)).